We begin with the raw amino-acid sequence, 277 residues long: Undecaprenyl-diphosphatase (277 aa).

8 helical membrane-spanning segments follow: residues 19–39 (FLPV…PFYG), 44–64 (FDDL…LFLY), 89–109 (FHFL…GFIA), 122–142 (LLEI…VAEW), 154–174 (IGFK…IPGM), 195–215 (AEFS…YKLI), 224–244 (NTIP…TLVI), and 257–277 (SVFG…TKLI).

The protein belongs to the UppP family.

It localises to the cell inner membrane. The enzyme catalyses di-trans,octa-cis-undecaprenyl diphosphate + H2O = di-trans,octa-cis-undecaprenyl phosphate + phosphate + H(+). Catalyzes the dephosphorylation of undecaprenyl diphosphate (UPP). Confers resistance to bacitracin. This chain is Undecaprenyl-diphosphatase, found in Leptospira interrogans serogroup Icterohaemorrhagiae serovar copenhageni (strain Fiocruz L1-130).